The sequence spans 324 residues: tRNA pseudouridine synthase B (324 aa).

Aspartate 49 acts as the Nucleophile in catalysis. A disordered region spans residues arginine 87–glutamate 107.

This sequence belongs to the pseudouridine synthase TruB family. Type 1 subfamily.

It carries out the reaction uridine(55) in tRNA = pseudouridine(55) in tRNA. Its function is as follows. Responsible for synthesis of pseudouridine from uracil-55 in the psi GC loop of transfer RNAs. This chain is tRNA pseudouridine synthase B, found in Brucella melitensis biotype 1 (strain ATCC 23456 / CCUG 17765 / NCTC 10094 / 16M).